Consider the following 95-residue polypeptide: Small ribosomal subunit protein uS19 (95 aa).

The protein belongs to the universal ribosomal protein uS19 family.

Its function is as follows. Protein S19 forms a complex with S13 that binds strongly to the 16S ribosomal RNA. The sequence is that of Small ribosomal subunit protein uS19 from Roseiflexus castenholzii (strain DSM 13941 / HLO8).